A 141-amino-acid polypeptide reads, in one-letter code: Large ribosomal subunit protein uL11 (141 aa).

This sequence belongs to the universal ribosomal protein uL11 family. Part of the ribosomal stalk of the 50S ribosomal subunit. Interacts with L10 and the large rRNA to form the base of the stalk. L10 forms an elongated spine to which L12 dimers bind in a sequential fashion forming a multimeric L10(L12)X complex. In terms of processing, one or more lysine residues are methylated.

Its function is as follows. Forms part of the ribosomal stalk which helps the ribosome interact with GTP-bound translation factors. This chain is Large ribosomal subunit protein uL11, found in Geobacillus sp. (strain WCH70).